The chain runs to 148 residues: Large ribosomal subunit protein uL15 (148 aa).

Residues 1 to 57 form a disordered region; the sequence is MRLNDVKPQKGSKKRRRRVGRGISAGQGASAGLGMRGQKSRSGSGTRPGFEGGQQPL. The span at 10–20 shows a compositional bias: basic residues; sequence KGSKKRRRRVG. Residues 23–35 are compositionally biased toward gly residues; that stretch reads ISAGQGASAGLGM.

Belongs to the universal ribosomal protein uL15 family. Part of the 50S ribosomal subunit.

Its function is as follows. Binds to the 23S rRNA. This is Large ribosomal subunit protein uL15 from Nostoc sp. (strain PCC 7120 / SAG 25.82 / UTEX 2576).